Consider the following 118-residue polypeptide: Altered inheritance of mitochondria protein 26, mitochondrial (118 aa).

Transmembrane regions (helical) follow at residues 7–27 (EHLL…AYFF), 41–61 (LAVT…SIPA), and 98–118 (FLFC…GLSI).

Its subcellular location is the mitochondrion membrane. Functionally, involved in selective mitochondria autophagy (mitophagy). The sequence is that of Altered inheritance of mitochondria protein 26, mitochondrial (AIM26) from Saccharomyces cerevisiae (strain ATCC 204508 / S288c) (Baker's yeast).